We begin with the raw amino-acid sequence, 347 residues long: Protein RecA (347 aa).

64-71 (GPESSGKT) contributes to the ATP binding site.

The protein belongs to the RecA family.

The protein resides in the cytoplasm. Its function is as follows. Can catalyze the hydrolysis of ATP in the presence of single-stranded DNA, the ATP-dependent uptake of single-stranded DNA by duplex DNA, and the ATP-dependent hybridization of homologous single-stranded DNAs. It interacts with LexA causing its activation and leading to its autocatalytic cleavage. This chain is Protein RecA, found in Bartonella tribocorum (strain CIP 105476 / IBS 506).